Here is a 497-residue protein sequence, read N- to C-terminus: METKLPPASTPTSPSSPGLSPVPPPDKVDGFSRRSLRRARPRRSHSSSQFRYQSNQQELTPLPLLKDVPASELHELLSRKLAQCGVMFDFLDCVADLKGKEVKRAALNELVECVGCTRGVLIEPVYPDIIRMISVNIFRTLPPSENPEFDPEEDEPNLEPSWPHLQLVYEFFLRFLESPDFQPSVAKRYVDQKFVLMLLELFDSEDPREREYLKTILHRVYGKFLGLRAYIRKQCNHIFLRFIYELEHFNGVAELLEILGSIINGFALPLKTEHKQFLVRVLIPLHSVKSLSVFHAQLAYCVVQFLEKDATLTEHVIRGLLKYWPKTCTQKEVMFLGEMEEILDVIEPSQFVKIQEPLFKQVARCVSSPHFQVAERALYFWNNEYILSLIEDNCHTVLPAVFGTLYQVSKEHWNQTIVSLIYNVLKTFMEMNGKLFDELTASYKLEKQQEQQKAQERQELWRGLEELRLRRLQGTQGAKEAPVPRPTPQVAASGGQS.

Over residues 1-19 (METKLPPASTPTSPSSPGL) the composition is skewed to low complexity. Disordered stretches follow at residues 1–55 (METK…YQSN) and 473–497 (QGTQ…GGQS). Ser32, Ser35, Ser44, Ser46, Ser47, and Ser48 each carry phosphoserine. Basic residues predominate over residues 34 to 45 (RSLRRARPRRSH).

The protein belongs to the phosphatase 2A regulatory subunit B56 family. As to quaternary structure, component of the serine/threonine-protein phosphatase 2A complex (PP2A). This complex consists of a common heterodimeric core enzyme, composed of a 36 kDa catalytic subunit (subunit C) and a 65 kDa constant scaffold subunit (PR65 or subunit A), that associates with a variety of regulatory subunits. Proteins that associate with the core dimer include three families of regulatory subunits B (the R2/B/PR55/B55, R3/B''/PR72/PR130/PR59 and R5/B'/B56 families), the 48 kDa variable regulatory subunit, viral proteins, and cell signaling molecules. Interacts with SGO1. Interacts with AKT1. Ubiquitinated by CUL3-KLHL15 complex; this modification leads to proteasomal degradation.

The protein localises to the cytoplasm. Functionally, as the regulatory component of the serine/threonine-protein phosphatase 2A (PP2A) holoenzyme, modulates substrate specificity, subcellular localization, and responsiveness to phosphorylation. The phosphorylated form mediates the interaction between PP2A and AKT1, leading to AKT1 dephosphorylation. The chain is Serine/threonine-protein phosphatase 2A 56 kDa regulatory subunit beta isoform (Ppp2r5b) from Mus musculus (Mouse).